The sequence spans 129 residues: Small ribosomal subunit protein uS11 (129 aa).

It belongs to the universal ribosomal protein uS11 family. As to quaternary structure, part of the 30S ribosomal subunit. Interacts with proteins S7 and S18. Binds to IF-3.

Its function is as follows. Located on the platform of the 30S subunit, it bridges several disparate RNA helices of the 16S rRNA. Forms part of the Shine-Dalgarno cleft in the 70S ribosome. The protein is Small ribosomal subunit protein uS11 of Tolumonas auensis (strain DSM 9187 / NBRC 110442 / TA 4).